The sequence spans 246 residues: tRNA (guanine-N(1)-)-methyltransferase (246 aa).

S-adenosyl-L-methionine contacts are provided by residues Gly113 and 133–138; that span reads IGDYVL.

Belongs to the RNA methyltransferase TrmD family. In terms of assembly, homodimer.

The protein localises to the cytoplasm. It catalyses the reaction guanosine(37) in tRNA + S-adenosyl-L-methionine = N(1)-methylguanosine(37) in tRNA + S-adenosyl-L-homocysteine + H(+). Its function is as follows. Specifically methylates guanosine-37 in various tRNAs. The chain is tRNA (guanine-N(1)-)-methyltransferase from Haemophilus influenzae (strain 86-028NP).